A 389-amino-acid chain; its full sequence is Succinate--CoA ligase [ADP-forming] subunit beta (389 aa).

Positions 9–244 (KELLRQFNVP…IDEEDAAEIE (236 aa)) constitute an ATP-grasp domain. ATP-binding positions include K46, 53-55 (GRG), E99, A102, and E107. Residues N199 and D213 each coordinate Mg(2+). Substrate-binding positions include N264 and 321 to 323 (GIM).

It belongs to the succinate/malate CoA ligase beta subunit family. As to quaternary structure, heterotetramer of two alpha and two beta subunits. It depends on Mg(2+) as a cofactor.

It catalyses the reaction succinate + ATP + CoA = succinyl-CoA + ADP + phosphate. The catalysed reaction is GTP + succinate + CoA = succinyl-CoA + GDP + phosphate. It functions in the pathway carbohydrate metabolism; tricarboxylic acid cycle; succinate from succinyl-CoA (ligase route): step 1/1. In terms of biological role, succinyl-CoA synthetase functions in the citric acid cycle (TCA), coupling the hydrolysis of succinyl-CoA to the synthesis of either ATP or GTP and thus represents the only step of substrate-level phosphorylation in the TCA. The beta subunit provides nucleotide specificity of the enzyme and binds the substrate succinate, while the binding sites for coenzyme A and phosphate are found in the alpha subunit. The polypeptide is Succinate--CoA ligase [ADP-forming] subunit beta (Polynucleobacter asymbioticus (strain DSM 18221 / CIP 109841 / QLW-P1DMWA-1) (Polynucleobacter necessarius subsp. asymbioticus)).